We begin with the raw amino-acid sequence, 373 residues long: ADP-forming sulfoacetate-CoA ligase subunit SauC (373 aa).

The ATP-grasp domain maps to 9 to 249 (KEAFREKGLP…YLQFNGDIAL (241 aa)). 35–97 (FAEVGFPCVL…EEAVDIDREI (63 aa)) contributes to the ATP binding site. Residues Glu-186 and Asn-188 each contribute to the Mg(2+) site.

The protein belongs to the succinate/malate CoA ligase beta subunit family. In terms of assembly, forms a complex with SauD. Mg(2+) is required as a cofactor.

It catalyses the reaction sulfoacetate + ATP + CoA = sulfoacetyl-CoA + ADP + phosphate. Its function is as follows. Involved in the degradation of sulfoacetate. Catalyzes the CoA- and ATP-dependent conversion of sulfoacetate to sulfoacetyl-CoA and ADP. Cannot use other sulfonic and carboxylic acids, and shows only residual activity with 3-sulfopropanoate and malonic acid. This is ADP-forming sulfoacetate-CoA ligase subunit SauC from Bilophila wadsworthia (strain 3_1_6).